Reading from the N-terminus, the 803-residue chain is Volume-regulated anion channel subunit LRRC8B (803 aa).

At 1-25 (MITLTELKCLADAQSSYHILKPWWD) the chain is on the cytoplasmic side. The chain crosses the membrane as a helical span at residues 26-46 (VFWYYITLIMLLVAVLAGALQ). The Extracellular segment spans residues 47 to 119 (LTQSRVLCCL…YEKQLHWFAK (73 aa)). Disulfide bonds link Cys55–Cys304 and Cys109–Cys289. The N-linked (GlcNAc...) asparagine glycan is linked to Asn78. Residues 120–140 (FFPYLVLLHTLIFAACSNFWL) form a helical membrane-spanning segment. The Cytoplasmic segment spans residues 141–261 (HYPSTSSRLE…DIIYRVYLKQ (121 aa)). Residues Ser186 and Ser196 each carry the phosphoserine modification. Residues 262–282 (IIVKVILFVLIITYVPYFLSY) traverse the membrane as a helical segment. The Extracellular portion of the chain corresponds to 283-307 (ITLEIDCSIDVQAFTGYKRYQCVYS). Residues 308–328 (LAEIFKVLASFYVILVMLYGL) traverse the membrane as a helical segment. Residues 329-803 (TSSYSLWWML…ERLQTCLDKC (475 aa)) are Cytoplasmic-facing. LRR repeat units lie at residues 415 to 439 (VKNS…VFEL), 440 to 462 (TEME…VAQL), 464 to 486 (NLRE…AFLE), 488 to 509 (NLRI…VFHL), 511 to 532 (NLKE…LHLE), 539 to 559 (NLRT…VTDL), 562 to 582 (SLQK…NNLK), 586 to 607 (NLKS…IFSL), 609 to 630 (NLHE…ISFQ), 634 to 655 (SLSC…IGAL), 657 to 678 (NLEQ…LFLC), 680 to 701 (KLHY…IQYL), 703 to 724 (NLQY…LFQC), 726 to 747 (KLQC…VGEL), and 749 to 771 (NLTH…EGCQ).

Belongs to the LRRC8 family. As to quaternary structure, heterohexamer; oligomerizes with other LRRC8 proteins (LRRC8A, LRRC8C, LRRC8D and/or LRRC8E) to form a heterohexamer. In vivo, the subunit composition may depend primarily on expression levels, and heterooligomeric channels containing various proportions of the different LRRC8 proteins may coexist.

Its subcellular location is the cell membrane. It is found in the endoplasmic reticulum membrane. The catalysed reaction is chloride(in) = chloride(out). It catalyses the reaction iodide(out) = iodide(in). The enzyme catalyses taurine(out) = taurine(in). Its function is as follows. Non-essential component of the volume-regulated anion channel (VRAC, also named VSOAC channel), an anion channel required to maintain a constant cell volume in response to extracellular or intracellular osmotic changes. The VRAC channel conducts iodide better than chloride and can also conduct organic osmolytes like taurine. Channel activity requires LRRC8A plus at least one other family member (LRRC8B, LRRC8C, LRRC8D or LRRC8E); channel characteristics depend on the precise subunit composition. In Mus musculus (Mouse), this protein is Volume-regulated anion channel subunit LRRC8B.